The primary structure comprises 252 residues: Undecaprenyl-diphosphatase (252 aa).

7 consecutive transmembrane segments (helical) span residues 1-21, 42-62, 74-94, 95-115, 172-192, 206-226, and 232-252; these read MTTL…FLPI, HKAF…FLYF, ILIA…IIKS, LFNP…LILI, AAEF…FYDV, NLIV…KWLL, and HSFI…YLWY.

The protein belongs to the UppP family.

It localises to the cell inner membrane. It carries out the reaction di-trans,octa-cis-undecaprenyl diphosphate + H2O = di-trans,octa-cis-undecaprenyl phosphate + phosphate + H(+). Catalyzes the dephosphorylation of undecaprenyl diphosphate (UPP). Confers resistance to bacitracin. This is Undecaprenyl-diphosphatase from Sulfurihydrogenibium sp. (strain YO3AOP1).